A 254-amino-acid chain; its full sequence is Alcohol dehydrogenase 2 (254 aa).

10–33 (FVAGLGGIGFDTSREIVKSGPKNL) serves as a coordination point for NAD(+). Position 138 (S138) interacts with substrate. Catalysis depends on Y151, which acts as the Proton acceptor.

Belongs to the short-chain dehydrogenases/reductases (SDR) family. Homodimer.

It catalyses the reaction a primary alcohol + NAD(+) = an aldehyde + NADH + H(+). The enzyme catalyses a secondary alcohol + NAD(+) = a ketone + NADH + H(+). In Drosophila buzzatii (Fruit fly), this protein is Alcohol dehydrogenase 2 (Adh2).